Reading from the N-terminus, the 504-residue chain is MTVLFILSAGLVAVFGYLVSWFIYCRTLHPLSKVPGPFWPSVTRLWLTYAVSRGELDVVQRDLHRRYGPLVRIAPDEIACADPEAIRKIYSTTSPLNKSDFYHIWDVGAFSKYPNAFAIVDENMHFERRRIVSSVYSMSTVLTLEPYIDNCSRLFVKRMTERTVPHEAIDLGDWFLWYAYDVIGELFFGHSLGFIENRGDEGGFLASLEVMLPVLTIAAASSPLVRGLIMGLFTLSSTARKGLKGMNHIIETARASVDKRASAVAEPGKGERKDLLHNLLNIVSSKGDKLDFGIEDVKNEAFAALTAGADATMIELQAIFYYLVKDRSVYEELRKEVDQAVETGKLSEFPSYSEVVQLPLLKATIKEALRLHPAVGFTMPRVVGQAGIELLGMYIPPGWKVGMNAAVVGRDEGVYGTDANTFRPERWIERTDSDMDRCNNLVFGAGTRTCIGKQIALSEIYKMVPLLIRKFDFALVDPSKSWTTHDYFFNKQSGVQVKVTVRGL.

Positions 1–16 (MTVLFILSAGLVAVFG) are cleaved as a signal peptide. N-linked (GlcNAc...) asparagine glycans are attached at residues Asn-97 and Asn-150. Cys-450 is a binding site for heme.

The protein belongs to the cytochrome P450 family. It depends on heme as a cofactor.

The enzyme catalyses griseophenone B + reduced [NADPH--hemoprotein reductase] + O2 + H(+) = desmethyl-dehydrogriseofulvin + oxidized [NADPH--hemoprotein reductase] + 2 H2O. Its pathway is secondary metabolite biosynthesis; terpenoid biosynthesis. Cytochrome P450 monooxygenase; part of the gene cluster that mediates the biosynthesis of griseofulvin, an important antifungal drug that has been in use for a long time for treating dermatophyte infections. The first step of the pathway is the formation of the heptaketide backbone by gsfA which is initiated by priming with acetyl-CoA, followed by sequential condensations of 6 malonyl-CoA units. The resulting benzophenone can undergo a spontaneous dehydration to form norlichexanthone. However, the true precursor for the griseofulvin biosynthesis is not norlichexanthone, but the heptaketide benzophenone that is O-methylated at 3-OH by gsfB to produce griseophenone D which is further methylated at 9-OH by gsfC to yield griseophenone C. Griseophenone C is then substrate of halogenase gsfI which is responsible for the regio-specific chlorination at the C13 position to form griseophenone B. The cytochrome P450 gsfF catalyzes the coupling of orcinol and phloroglucinol rings in griseophenone B to form desmethyl-dehydrogriseofulvin A which is further methylated at 5-OH by gsfD to yield dehydrogriseofulvin. Finally, gsfE performs stereospecific reduction of enone 18 of dehydrogriseofulvin to afford the final product griseofulvin. In Penicillium aethiopicum, this protein is Cytochrome P450 monooxygenase gsfF.